A 479-amino-acid polypeptide reads, in one-letter code: Adenosylhomocysteinase (479 aa).

The substrate site is built by Thr66, Asp142, and Glu203. Position 204–206 (204–206 (TTT)) interacts with NAD(+). Residues Lys233 and Asp237 each coordinate substrate. Residues Asn238, 267-272 (GYGDVG), Glu290, Asn325, 346-348 (IGH), and Asn394 each bind NAD(+).

Belongs to the adenosylhomocysteinase family. NAD(+) serves as cofactor.

Its subcellular location is the cytoplasm. It carries out the reaction S-adenosyl-L-homocysteine + H2O = L-homocysteine + adenosine. It participates in amino-acid biosynthesis; L-homocysteine biosynthesis; L-homocysteine from S-adenosyl-L-homocysteine: step 1/1. In terms of biological role, may play a key role in the regulation of the intracellular concentration of adenosylhomocysteine. The chain is Adenosylhomocysteinase from Nitratidesulfovibrio vulgaris (strain DSM 19637 / Miyazaki F) (Desulfovibrio vulgaris).